Here is a 371-residue protein sequence, read N- to C-terminus: tRNA-specific 2-thiouridylase MnmA (371 aa).

ATP-binding positions include 22–29 (GLSGGVDS) and M48. Positions 108 to 110 (NPD) are interaction with target base in tRNA. The active-site Nucleophile is C113. A disulfide bond links C113 and C209. G137 lines the ATP pocket. Residues 159–161 (KDQ) form an interaction with tRNA region. C209 acts as the Cysteine persulfide intermediate in catalysis.

This sequence belongs to the MnmA/TRMU family.

It is found in the cytoplasm. The catalysed reaction is S-sulfanyl-L-cysteinyl-[protein] + uridine(34) in tRNA + AH2 + ATP = 2-thiouridine(34) in tRNA + L-cysteinyl-[protein] + A + AMP + diphosphate + H(+). Functionally, catalyzes the 2-thiolation of uridine at the wobble position (U34) of tRNA, leading to the formation of s(2)U34. This is tRNA-specific 2-thiouridylase MnmA from Coxiella burnetii (strain CbuK_Q154) (Coxiella burnetii (strain Q154)).